The primary structure comprises 994 residues: Regulator of telomere elongation helicase 1 homolog (994 aa).

One can recognise a Helicase ATP-binding domain in the interval 15–324; the sequence is SKTSIKFPFE…KLIENLRTED (310 aa). 50–57 is an ATP binding site; sequence SPTGTGKT. [4Fe-4S] cluster is bound by residues C142, C160, C169, and C208. The DEAH box signature appears at 251-254; sequence DEAH. Over residues 818–831 the composition is skewed to basic and acidic residues; sequence KIEKKEKIEPRPIK. Positions 818–896 are disordered; sequence KIEKKEKIEP…HVVSGSEPPK (79 aa). Over residues 833-844 the composition is skewed to polar residues; that stretch reads DSSSSSVFSLPT. Residues 847-856 show a composition bias toward basic and acidic residues; sequence DELKVKKWEQ. Polar residues-rich tracts occupy residues 859 to 869 and 880 to 889; these read DSQTNVSSSSD and PGNSSGQHVV.

The protein belongs to the helicase family. RAD3/XPD subfamily.

The protein localises to the nucleus. It catalyses the reaction ATP + H2O = ADP + phosphate + H(+). A probable ATP-dependent DNA helicase implicated in DNA repair and the maintenance of genomic stability. Acts as an anti-recombinase to counteract toxic recombination and limit crossover during meiosis. Regulates meiotic recombination and crossover homeostasis by physically dissociating strand invasion events and thereby promotes noncrossover repair by meiotic synthesis dependent strand annealing (SDSA) as well as disassembly of D loop recombination intermediates. This Caenorhabditis briggsae protein is Regulator of telomere elongation helicase 1 homolog.